Reading from the N-terminus, the 185-residue chain is Translation initiation factor IF-3 (185 aa).

Belongs to the IF-3 family. In terms of assembly, monomer.

The protein localises to the cytoplasm. In terms of biological role, IF-3 binds to the 30S ribosomal subunit and shifts the equilibrium between 70S ribosomes and their 50S and 30S subunits in favor of the free subunits, thus enhancing the availability of 30S subunits on which protein synthesis initiation begins. The polypeptide is Translation initiation factor IF-3 (Coxiella burnetii (strain RSA 493 / Nine Mile phase I)).